Consider the following 444-residue polypeptide: MPEGAGRPWNLTELEEEKLKTMWSYLFKLFGITLLERTESWYTVKTHLSDDSSSSSSHRLSSVSYAKSRTRLELTSSSHGSDTRSFNDKTKNVHLERVEKIASEWDPEGLRVCFWDAVNCDDPDGLLLRFLRARKWNVEAALEMFMKTVHWRSREMNVGEIVCNADHLDKDDDFVRQLRIGKCFIFGEDKHNRPVCYIRARLHKVGDVSPESVERLTVWVMETARLILKPPIETATVVFDMTDFSMSNMDYGPLKFMIKCFEAHYPECLGECIVHKAPWLFQGVWSIIKSWLDPVVVSKVKFTRNYRDLQQYINPDNILKEFGGPNPWRYTYPEPCQNEAEALKNVEARKSLRAKKDAIAKQYEEVTMDWILNNGDMAEVKQKRRKLASQLIDAYWNLDKYIRARSVYDRMGLIAPQTSHTLLLSQPTNGDVKESMVEVTSSAT.

Serine 40 is subject to Phosphoserine. Threonine 43 carries the post-translational modification Phosphothreonine. A Phosphoserine modification is found at serine 81. Residues aspartate 171–tyrosine 330 form the CRAL-TRIO domain. Position 418 is a phosphothreonine (threonine 418).

The chain is CRAL-TRIO domain-containing protein C3H8.02 from Schizosaccharomyces pombe (strain 972 / ATCC 24843) (Fission yeast).